Consider the following 443-residue polypeptide: Endonuclease CUE2 (443 aa).

CUE domains are found at residues 8 to 51 and 55 to 98; these read DHES…KEND and TVDN…NYET. The Smr domain occupies 347–443; the sequence is LDFHGFLPSE…YFRIEGKKKK (97 aa).

Functionally, mRNA endonuclease involved in the No-Go Decay (NGD) pathway, which catalyzes mRNA cleavage and degradation in response to ribosome collisions. Acts downstream of the ribosome collision sensor HEL2. Specifically recognizes and binds RPS7/eS7 polyubiquitinated by MOT2/NOT4 and HEL2, promoting CUE2 recruitment to stalled ribosomes, where it mediates mRNA cleavage upstream of the colliding ribosome. Also mediates mRNA cleavage within colliding ribosomes: recruited to colliding ribosomes downstream of the RQT (ribosome quality control trigger) complex following disassembly of stalled ribosomes and cleaves mRNAs partially released from the colliding ribosome. This Saccharomyces cerevisiae (strain ATCC 204508 / S288c) (Baker's yeast) protein is Endonuclease CUE2.